A 215-amino-acid polypeptide reads, in one-letter code: Ras-related protein RAB1BV (215 aa).

GTP-binding positions include 22-29 (GDSGVGKS), 70-74 (DTAGQ), and 128-131 (NKAD). The disordered stretch occupies residues 183–215 (DSDTRQEAQPSITIKPADQSGNQAAAKSACCGS). Residues Cys-212 and Cys-213 are each lipidated (S-geranylgeranyl cysteine).

The protein belongs to the small GTPase superfamily. Rab family.

The protein localises to the cell membrane. The sequence is that of Ras-related protein RAB1BV (RAB1BV) from Beta vulgaris (Sugar beet).